Consider the following 35-residue polypeptide: Thrombin-like enzyme cerastobin (35 aa).

The Peptidase S1 domain maps to 1–35; the sequence is VIGGAKCNINEHRSIVLLYSSRLFGHTLINKEWVL.

This sequence belongs to the peptidase S1 family. Snake venom subfamily. As to quaternary structure, monomer. As to expression, expressed by the venom gland.

Its subcellular location is the secreted. Its activity is regulated as follows. Inhibited by diisopropylfluorophosphate (DFP). Thrombin-like snake venom serine protease, that cleaves both alpha-chain (FGA) and beta-chain (FGB) of fibrinogen. Partially degrades factor X (F10), and release bradykinin from kininogen (KNG). Potently induces platelet aggregation. Shows a proteolytic activity towards protein constituents of the platelets cytoskeleton. Hydrolyzes actin, actin-binding protein, and P235. Shows a preferential cleavage at Arg-|-Xaa bonds. This Cerastes vipera (Sahara sand viper) protein is Thrombin-like enzyme cerastobin.